The primary structure comprises 708 residues: MPRFAIIFALLIAYSLFLSTLFTGSIPDRANTVTSNAPCQVVIWDWIRTRRICNCCSRLCYSLLGRSNLSRTAKRGVCTIAGAVLATAAVIVAAVLVGKSSGSATKRGLTKTISVLNHTIPFTDHILNGQTLSNGTGSNFVTIGFSGYAVHATIKRASTTDIISWVIPESMEPTLARVASYVSSSSINLAAVPDTGGNASALSFQNAVQEFATSWVSMTYDQSYGDLRNVANDEGGEEILILMRKRSYRISFQVIETGSTALLLRTRRVVSQLITMTYLVTVQARVGIQIGDIFQHYGGIDNYVMTSISVLRTLEDKAFHENKLLIVREPPNKSNQDANQSYRLRPFSANDLIQNLKSVDIGFLAFCSFFDKYAHYPEIIMMKITIFISKGNLWSIIYVIQARYVRKRVMKVRGQMPGGLLTNMESLLNIVSTPNLNISEFHIQTHSMSQSKPMYFQKQCYSSQNNIIYIYNSIHITCGAVYVIVHDVRTPSVFVLIELRNCKPLKNSWCETTKTSPRDTKIKKNEYNETVCRRAGALLDGRVRTIRFLMMRTHWSRVKGVSCNTANRLSRFCNHVVSYYPSQNATIHLLPTSLRAESLEQQYTTRPLSSSNNRFCCLKSIFINNCKKACESPSLVSCNLQQTAELLMVYYLYICEACYVSRNHDLLSKQCMSTVRAVYVARMRLPKFRSTFPCMPRLCWLVNGVVVV.

The N-terminal stretch at 1–27 is a signal peptide; that stretch reads MPRFAIIFALLIAYSLFLSTLFTGSIP. A propeptide spanning residues 28–36 is cleaved from the precursor; the sequence is DRANTVTSN. 3 helical membrane-spanning segments follow: residues 77–97, 380–400, and 466–486; these read VCTI…AVLV, IMMK…IYVI, and NIIY…VIVH.

This sequence to yeast YER187w. Monomer.

It localises to the cell membrane. Its function is as follows. Kills sensitive strains of yeast. This chain is Killer toxin KHS (KHS1), found in Saccharomyces cerevisiae (Baker's yeast).